The chain runs to 358 residues: Probable protein phosphatase 2C 34 (358 aa).

Residues 62-349 (LASVFSRRGE…DDISAVCLFF (288 aa)) form the PPM-type phosphatase domain. Mn(2+) contacts are provided by Asp98, Gly99, Asp294, and Asp340.

The protein belongs to the PP2C family. Requires Mg(2+) as cofactor. Mn(2+) serves as cofactor.

It carries out the reaction O-phospho-L-seryl-[protein] + H2O = L-seryl-[protein] + phosphate. The enzyme catalyses O-phospho-L-threonyl-[protein] + H2O = L-threonyl-[protein] + phosphate. The protein is Probable protein phosphatase 2C 34 of Arabidopsis thaliana (Mouse-ear cress).